The following is a 299-amino-acid chain: Oxygen-dependent coproporphyrinogen-III oxidase (299 aa).

Serine 92 contacts substrate. Residues histidine 96 and histidine 106 each contribute to the Mn(2+) site. The active-site Proton donor is the histidine 106. Asparagine 108–arginine 110 lines the substrate pocket. Mn(2+) is bound by residues histidine 145 and histidine 175. The interval tyrosine 240–glutamate 275 is important for dimerization. Glycine 258–arginine 260 is a binding site for substrate.

It belongs to the aerobic coproporphyrinogen-III oxidase family. As to quaternary structure, homodimer. Mn(2+) is required as a cofactor.

The protein localises to the cytoplasm. It catalyses the reaction coproporphyrinogen III + O2 + 2 H(+) = protoporphyrinogen IX + 2 CO2 + 2 H2O. Its pathway is porphyrin-containing compound metabolism; protoporphyrin-IX biosynthesis; protoporphyrinogen-IX from coproporphyrinogen-III (O2 route): step 1/1. Its function is as follows. Involved in the heme biosynthesis. Catalyzes the aerobic oxidative decarboxylation of propionate groups of rings A and B of coproporphyrinogen-III to yield the vinyl groups in protoporphyrinogen-IX. This chain is Oxygen-dependent coproporphyrinogen-III oxidase, found in Escherichia coli O17:K52:H18 (strain UMN026 / ExPEC).